The sequence spans 684 residues: Transcriptional regulatory protein RCO1 (684 aa).

Met1 is modified (N-acetylmethionine). Residues 1–48 form a disordered region; the sequence is MDTSKKDTTRSPSHSNSSSPSSSSLSSSSSKEKKRPKRLSSQNVNYDL. Over residues 10–29 the composition is skewed to low complexity; it reads RSPSHSNSSSPSSSSLSSSS. Ser68 is subject to Phosphoserine. The PHD-type 1 zinc finger occupies 260-309; sequence EDFCSACNQSGSFLCCDTCPKSFHFLCLDPPIDPNNLPKGDWHCNECKFK. A PHD-type 2; atypical zinc finger spans residues 414 to 472; the sequence is FLICYKCNQTRLGSWSHPENSRLIMTCDYCQTPWHLDCVPRASFKNLGSKWKCPLHSPT. Ser683 carries the post-translational modification Phosphoserine.

Component of the RPD3C(S) complex composed of at least EAF3, RCO1, RPD3, SIN3, and UME1.

It localises to the nucleus. In terms of biological role, catalytic component of the RPD3C(S) histone deacetylase complex responsible for the deacetylation of lysine residues on the N-terminal part of the core histones (H2A, H2B, H3 and H4). Histone deacetylation gives a tag for epigenetic repression and plays an important role in transcriptional regulation, cell cycle progression, DNA damage response, osmotic stress response and developmental events. The protein is Transcriptional regulatory protein RCO1 (RCO1) of Saccharomyces cerevisiae (strain ATCC 204508 / S288c) (Baker's yeast).